The chain runs to 422 residues: Glycine amidinotransferase, mitochondrial (422 aa).

The transit peptide at 1-37 (MLRVRCLRGGSRGAEAAHFIGSRLGRAFTGWVQRSLQ) directs the protein to the mitochondrion. Catalysis depends on residues aspartate 253 and histidine 302. Cysteine 406 (amidino-cysteine intermediate) is an active-site residue. At threonine 416 the chain carries Phosphothreonine.

The protein belongs to the amidinotransferase family. In terms of assembly, homodimer.

The protein resides in the mitochondrion inner membrane. The catalysed reaction is L-arginine + glycine = guanidinoacetate + L-ornithine. Its pathway is amine and polyamine biosynthesis; creatine biosynthesis; creatine from L-arginine and glycine: step 1/2. Its function is as follows. Catalyzes the biosynthesis of guanidinoacetate, the immediate precursor of creatine. Creatine plays a vital role in energy metabolism in muscle tissues. May play a role in embryonic and central nervous system development. In Gallus gallus (Chicken), this protein is Glycine amidinotransferase, mitochondrial.